The following is a 401-amino-acid chain: MEQGLKISTPNAKLVRGAVLLPSDKYVFHLIQSRTLCMALSMPGEYLPAPVLFDRFEGGSSGECSLHSRQNVCLYLVRILLSKHPYVLNSQLLVGYQHRQEAVVLYKQLLVKTKDFGISEIKLPCSIVVGPNPMSAEGTVQAERELPSCELVITSEFKTVWINESANQEKEFSPHDAISIPLAPGTPSKPIIKQPPFLPISKETAILHAQLFYAAGAGFPPIHNCPASAFTTLAVMCKSHNSINLVPELEIKPRQLLLLKHVLLTRMGLENCLQDFIQAYAERLPPLADEQVKYFEKVLGTAKDRAEDIIFILNSVGATSFTNRICSSNTDPMLTKAMQKYFLMFPPADPINALPFAVDIISIICQGANFNTVVLFVQRYIKIQERAAKTNQIKMFALLSI.

Belongs to the herpesviridae BTRF1 family.

This is an uncharacterized protein from Connochaetes taurinus (Blue wildebeest).